We begin with the raw amino-acid sequence, 437 residues long: Probable carboxypeptidase HCBG_00059 (437 aa).

Residues 1–20 (MKLSNLAALLSASTVAPVAA) form the signal peptide. A glycan (N-linked (GlcNAc...) asparagine) is linked at N153. D163 contributes to the Zn(2+) binding site. The active-site Proton acceptor is E195. Residue E196 coordinates Zn(2+). The N-linked (GlcNAc...) asparagine glycan is linked to N346.

Belongs to the peptidase M20A family. Requires Zn(2+) as cofactor.

It localises to the secreted. In Ajellomyces capsulatus (strain G186AR / H82 / ATCC MYA-2454 / RMSCC 2432) (Darling's disease fungus), this protein is Probable carboxypeptidase HCBG_00059.